Consider the following 85-residue polypeptide: Large ribosomal subunit protein bL27 (85 aa).

The disordered stretch occupies residues 1 to 21; sequence MAHKKGVGSSRNGRDSDGQRL.

This sequence belongs to the bacterial ribosomal protein bL27 family.

The polypeptide is Large ribosomal subunit protein bL27 (Geobacter sp. (strain M21)).